Consider the following 404-residue polypeptide: uncharacterized protein (404 aa).

Transmembrane regions (helical) follow at residues 37 to 57, 92 to 112, 122 to 142, 188 to 208, 230 to 250, and 272 to 292; these read LLILSVIAFFWGLLGVVFVQF, IYNVIFWLSQILINIPLFVLG, LLTLYFVVVSNVFGFAFSYIP, MFYALIWGFLQAVFYSVILII, IGGILFIVNTLSFLIGYTIGT, and AFFLSPNLVFTIFMNIILGIF.

The protein localises to the cell membrane. This is an uncharacterized protein from Mycoplasma pneumoniae (strain ATCC 29342 / M129 / Subtype 1) (Mycoplasmoides pneumoniae).